The following is a 359-amino-acid chain: Magnesium transporter NIPA2 (359 aa).

Residues 1–9 (MSLGRGKYD) are Extracellular-facing. A helical transmembrane segment spans residues 10–30 (FYIGLGLAMTSSIFIGGSFIL). The Cytoplasmic segment spans residues 31–56 (KKKGLLRLARKGSMRAGQGGHAYLKE). A helical transmembrane segment spans residues 57-77 (WLWWAGLLSMGAGEVANFAAY). Position 78 (alanine 78) is a topological domain, extracellular. A helical membrane pass occupies residues 79–99 (FAPATLVTPLGALSVLVSAIL). Topologically, residues 100–107 (SSYFLNER) are cytoplasmic. The helical transmembrane segment at 108-128 (LNLHGKIGCLLSILGSTVMVI) threads the bilayer. Residues 129–149 (HAPKEEEIETLNEMSHKLGDP) lie on the Extracellular side of the membrane. The chain crosses the membrane as a helical span at residues 150–170 (GFVVFATFVVIVALIFIFVVG). The Cytoplasmic segment spans residues 171-175 (PRHGQ). The helical transmembrane segment at 176 to 196 (TNILVYITICSVIGAFSVSCV) threads the bilayer. Over 197 to 215 (KGLGIAIKELLAGKPVLQH) the chain is Extracellular. The helical transmembrane segment at 216-236 (PLAWILLFSLVVCVSTQINYL) threads the bilayer. The Cytoplasmic segment spans residues 237–246 (NRALDIFNTS). The chain crosses the membrane as a helical span at residues 247-267 (IVTPIYYVFFTTSVLTCSAIL). Residues 268 to 278 (FKEWQDMPVDD) lie on the Extracellular side of the membrane. A helical transmembrane segment spans residues 279-299 (VIGTLSGFFTIIVGIFLLHAF). The Cytoplasmic segment spans residues 300-359 (KDVSFSLASLPVSFRKDEKAMNGNLSSMYEVLNNNEDDLPCGIEHTGENISRRNGNLPSF).

This sequence belongs to the NIPA family. As to expression, widely expressed. Expressed at high levels in the kidney.

It localises to the cell membrane. The protein localises to the early endosome. The enzyme catalyses Mg(2+)(in) = Mg(2+)(out). Acts as a selective Mg(2+) transporter. This chain is Magnesium transporter NIPA2 (Nipa2), found in Mus musculus (Mouse).